A 223-amino-acid chain; its full sequence is Endo-1,4-beta-xylanase 2 (223 aa).

The N-terminal stretch at 1-19 (MVSFTSLLAGVAAISGVLA) is a signal peptide. Residues 20–33 (APAAEVESVAVEKR) constitute a propeptide that is removed on maturation. A Pyrrolidone carboxylic acid modification is found at Q34. One can recognise a GH11 domain in the interval 34–222 (QTIQPGTGYN…FSSGSASITV (189 aa)). N-linked (GlcNAc...) asparagine glycosylation is found at N71 and N94. Substrate-binding residues include Y106 and Y110. E119 serves as the catalytic Nucleophile. Y121, R155, P159, Q169, and Y204 together coordinate substrate. The active-site Proton donor is the E210.

Belongs to the glycosyl hydrolase 11 (cellulase G) family.

The protein resides in the secreted. It catalyses the reaction Endohydrolysis of (1-&gt;4)-beta-D-xylosidic linkages in xylans.. Its pathway is glycan degradation; xylan degradation. In terms of biological role, glycoside hydrolase involved in the hydrolysis of xylan, a major plant cell wall hemicellulose made up of 1,4-beta-linked D-xylopyranose residues. Catalyzes the endohydrolysis of the main-chain 1,4-beta-glycosidic bonds connecting the xylose subunits yielding various xylooligosaccharides and xylose. The catalysis proceeds by a double-displacement reaction mechanism with a putative covalent glycosyl-enzyme intermediate, with retention of the anomeric configuration. Produces xylobiose and xylose as the main degradation products. This is Endo-1,4-beta-xylanase 2 from Hypocrea jecorina (strain ATCC 56765 / BCRC 32924 / NRRL 11460 / Rut C-30) (Trichoderma reesei).